A 1992-amino-acid chain; its full sequence is Fer-1-like protein 4 (1992 aa).

3 consecutive C2 domains span residues 1–97 (MALT…VLRE), 214–330 (PRGD…QKWA), and 369–502 (TSSD…AGFN). At 1–1952 (MALTVCVRHL…PLKTFIFFIW (1952 aa)) the chain is on the extracellular side. 3 disordered regions span residues 554–606 (RVEP…APEI), 661–686 (AGRQ…LEVQ), and 691–710 (SEDR…PAQW). A compositionally biased stretch (polar residues) spans 559–569 (PSQTTQRSGLS). The segment covering 572–581 (TGKKKKKKEK) has biased composition (basic residues). C2 domains lie at 951 to 1078 (PSSG…ELQF) and 1126 to 1250 (ISGH…PQEE). Disordered stretches follow at residues 1245 to 1276 (EDPQ…EAGT) and 1322 to 1361 (FQGQ…SKVS). Acidic residues-rich tracts occupy residues 1247-1257 (PQEEEETEEET) and 1328-1337 (SDDEMDEAGD). C2 domains are found at residues 1430–1549 (SFSE…ANCG) and 1675–1824 (VPAP…EHCS). Positions 1464, 1470, 1519, 1521, 1527, 1795, 1798, and 1801 each coordinate Ca(2+). The disordered stretch occupies residues 1862–1885 (EAREAQAGKKRKRKRRAGRPEDLE). The span at 1869–1878 (GKKRKRKRRA) shows a compositional bias: basic residues. The helical transmembrane segment at 1953–1973 (RRYWRILVLLLLALITIFLLL) threads the bilayer. Topologically, residues 1974–1992 (VFYTIPGQISEVIFSPVHK) are cytoplasmic.

The cofactor is Ca(2+).

The protein resides in the membrane. The chain is Fer-1-like protein 4 (Fer1l4) from Mus musculus (Mouse).